Consider the following 465-residue polypeptide: MESLRIYNTLARDKQVFVPRQPGEVRMYVCGITVYDYCHVGHARMLVVFDLVQRWLRAIGYRVTYVRNITDIDDKIIRRAVENGETIKSLTDRFIGAMHEDETALGIQRPDVEPRATQFIPQMLGMIETLETNGYAYQAADGDVNYSVRKFADYGKLSGKSLDDLRAGERVAANDAKQDPLDFVLWKRAKADEPEGASWASKYGMGRPGWHIECSAMGCSLLGNHFDIHGGGQDLQFPHHENEIAQSEGATGETFVNYWMHNGFVQVDNEKMSKSLGNFFTIREVLERYDAEVVRFFIVRTHYRSPLNYSDVHLDDARASLTRLYTALKDVEPDTLALDWNEPHAQRFAAAMNDDFNTPVAVATLFELAGEVNRTRDASLARQLKQLAGLLGLLGREPRAFLQQASGAAQAGGLAADEIEAQIAARVAAKQAKDYAEADRIRAELLEAGIALEDKPGGSTEWRRV.

Cys-30 contacts Zn(2+). Residues 32-42 (ITVYDYCHVGH) carry the 'HIGH' region motif. Zn(2+) is bound by residues Cys-214, His-239, and Glu-243. Residues 271-275 (KMSKS) carry the 'KMSKS' region motif. Lys-274 contributes to the ATP binding site.

The protein belongs to the class-I aminoacyl-tRNA synthetase family. As to quaternary structure, monomer. It depends on Zn(2+) as a cofactor.

It is found in the cytoplasm. It catalyses the reaction tRNA(Cys) + L-cysteine + ATP = L-cysteinyl-tRNA(Cys) + AMP + diphosphate. This Burkholderia cenocepacia (strain HI2424) protein is Cysteine--tRNA ligase.